The primary structure comprises 417 residues: Phosphoglycerate kinase, cytosolic (417 aa).

(2R)-3-phosphoglycerate is bound by residues valine 23, aspartate 24, phenylalanine 25, asparagine 26, arginine 39, serine 61, histidine 62, glycine 64, arginine 65, arginine 132, histidine 168, and arginine 169. ADP-binding residues include glycine 214 and alanine 215. Glycine 214 is a binding site for CDP. Residues alanine 215 and lysine 216 each coordinate AMP. Residue alanine 215 coordinates ATP. Alanine 215 serves as a coordination point for Mg(2+). Lysine 216 lines the (2R)-3-phosphoglycerate pocket. CDP is bound at residue aspartate 219. Aspartate 219 contributes to the Mg(2+) binding site. The ADP site is built by lysine 220 and glycine 238. Lysine 220 contacts AMP. Lysine 220 contacts ATP. Glycine 238 contacts CDP. The AMP site is built by alanine 239 and alanine 311. Positions 239 and 311 each coordinate ATP. The ADP site is built by alanine 311 and asparagine 335. CDP is bound by residues glycine 336 and phenylalanine 341. ADP contacts are provided by phenylalanine 341, glutamate 342, aspartate 374, and threonine 375. Glutamate 342 serves as a coordination point for AMP. 3 residues coordinate ATP: glutamate 342, aspartate 374, and threonine 375. Position 374 (aspartate 374) interacts with Mg(2+).

It belongs to the phosphoglycerate kinase family. As to quaternary structure, monomer. Mg(2+) serves as cofactor.

It is found in the cytoplasm. It catalyses the reaction (2R)-3-phosphoglycerate + ATP = (2R)-3-phospho-glyceroyl phosphate + ADP. The protein operates within carbohydrate degradation; glycolysis; pyruvate from D-glyceraldehyde 3-phosphate: step 2/5. The sequence is that of Phosphoglycerate kinase, cytosolic (PGKB) from Crithidia fasciculata.